We begin with the raw amino-acid sequence, 250 residues long: MSKLRVAVLGAKGRIGSEAVRAVEAAEDMELVAALGRGDGLEALAESGAQVAVELTTPASVMDNLDYCLRHGIHAVVGTTGWTDERLARLNAWLDASPGTGVLIAPNFSIGAVLTMKFAQIAAPYFESVEVVELHHPNKVDAPSGTATRTAQLIAQARQKAGSAPAPDATATALDGARGANVDGVPVHAVRLRGLLAHQEVLLGAEGETLTVRHDSLHHSSFMPGILLGARRVVTTPGLTFGLEHFLDLN.

NAD(+) contacts are provided by residues 10–15 (GAKGRI), 78–80 (GTT), and 105–108 (APNF). The active-site Proton donor/acceptor is His135. Residue His136 coordinates (S)-2,3,4,5-tetrahydrodipicolinate. The active-site Proton donor is the Lys139. 145–146 (GT) contributes to the (S)-2,3,4,5-tetrahydrodipicolinate binding site.

The protein belongs to the DapB family.

The protein localises to the cytoplasm. It catalyses the reaction (S)-2,3,4,5-tetrahydrodipicolinate + NAD(+) + H2O = (2S,4S)-4-hydroxy-2,3,4,5-tetrahydrodipicolinate + NADH + H(+). The enzyme catalyses (S)-2,3,4,5-tetrahydrodipicolinate + NADP(+) + H2O = (2S,4S)-4-hydroxy-2,3,4,5-tetrahydrodipicolinate + NADPH + H(+). Its pathway is amino-acid biosynthesis; L-lysine biosynthesis via DAP pathway; (S)-tetrahydrodipicolinate from L-aspartate: step 4/4. Its function is as follows. Catalyzes the conversion of 4-hydroxy-tetrahydrodipicolinate (HTPA) to tetrahydrodipicolinate. The protein is 4-hydroxy-tetrahydrodipicolinate reductase of Streptomyces coelicolor (strain ATCC BAA-471 / A3(2) / M145).